Reading from the N-terminus, the 244-residue chain is 1-(5-phosphoribosyl)-5-[(5-phosphoribosylamino)methylideneamino] imidazole-4-carboxamide isomerase (244 aa).

Aspartate 15 (proton acceptor) is an active-site residue. Aspartate 136 serves as the catalytic Proton donor.

It belongs to the HisA/HisF family.

The protein localises to the cytoplasm. The catalysed reaction is 1-(5-phospho-beta-D-ribosyl)-5-[(5-phospho-beta-D-ribosylamino)methylideneamino]imidazole-4-carboxamide = 5-[(5-phospho-1-deoxy-D-ribulos-1-ylimino)methylamino]-1-(5-phospho-beta-D-ribosyl)imidazole-4-carboxamide. It participates in amino-acid biosynthesis; L-histidine biosynthesis; L-histidine from 5-phospho-alpha-D-ribose 1-diphosphate: step 4/9. In Dehalococcoides mccartyi (strain CBDB1), this protein is 1-(5-phosphoribosyl)-5-[(5-phosphoribosylamino)methylideneamino] imidazole-4-carboxamide isomerase.